We begin with the raw amino-acid sequence, 383 residues long: METLASRLDACQETLLELYEKDSNKLEDQIKHWAQVRLENVMLFKARECGMTRVGCTTVPALTVSKAKACQAIEVQLALQTLMQSAYSTEAWTLRDTCLEMWEAPPKRCWKKKGQSVLVKFDGSCDRDMIYTGWGHIYVQDINDDTWHKVPGQVDELGLFYVHDGVRVNYVDFGIEALTYGVTGTWEVQVGGRVIYHTSASVSSTQAATSDDDTLSPLRSAAAAVTATATATTAVPPTLQDSAQAPSSPPPKRQRVIVGQQWQQPDSTRKVREGQVECQNDRSIRNPDSTDPRRGHSDLDAVPVIHLQGEANCLKCFRYRVQKHKDVLFVKASSTWHWACGNGDKTAFVTLWYKSQEQRAEFLTRVHLPKGVKALPGYMSAFV.

A transactivation domain region spans residues 1-202 (METLASRLDA…RVIYHTSASV (202 aa)). A disordered region spans residues 233-297 (TAVPPTLQDS…DSTDPRRGHS (65 aa)). Residues 267 to 297 (STRKVREGQVECQNDRSIRNPDSTDPRRGHS) are compositionally biased toward basic and acidic residues. Positions 303–383 (PVIHLQGEAN…ALPGYMSAFV (81 aa)) are DNA-binding domain.

Belongs to the papillomaviridae E2 protein family. As to quaternary structure, binds DNA as homodimer. Interacts with protein E1; this interaction greatly increases E1 DNA-binding activity. Interacts with protein L1; this interaction enhances E2-dependent replication and transcription activation. Interacts with protein L2; this interaction inhibits E2 transcriptional activity but not DNA replication function E2. Interacts with protein E7; this interaction inhibits E7 oncogenic activity. Interacts with host TAF1; this interaction modulates E2-dependent transcriptional regulation. Interacts with host BRD4; this interaction mediates E2 transcriptional activation function. Additionally, the interaction with host BRD4 on mitotic chromosomes mediates tethering of the viral genome. Interacts with host TOPBP1; this interaction is required for optimal viral DNA replication. Post-translationally, phosphorylated.

The protein resides in the host nucleus. Its function is as follows. Plays a role in the initiation of viral DNA replication. A dimer of E2 interacts with a dimer of E1 in order to improve specificity of E1 DNA binding activity. Once the complex recognizes and binds DNA at specific sites, the E2 dimer is removed from DNA. E2 also regulates viral transcription through binding to the E2RE response element (5'-ACCNNNNNNGGT-3') present in multiple copies in the regulatory regions of the viral genome. Activates or represses transcription depending on E2RE's position with regards to proximal promoter elements including the TATA-box. Repression occurs by sterically hindering the assembly of the transcription initiation complex. In Human papillomavirus 57, this protein is Regulatory protein E2.